The chain runs to 350 residues: m7GpppX diphosphatase (350 aa).

At Ser-2 the chain carries N-acetylserine. Ser-60 is subject to Phosphoserine. Position 66 is a phosphothreonine (Thr-66). Residue Thr-66 is modified to Phosphothreonine; by YAK1. A Phosphotyrosine modification is found at Tyr-70. Residue Thr-120 is modified to Phosphothreonine. Substrate is bound by residues Glu-171, Lys-196, and 259–270 (HYQPSYYHFHIH). A Histidine triad motif motif is present at residues 266–270 (HFHIH). His-268 (nucleophile) is an active-site residue.

It belongs to the HIT family. As to quaternary structure, homodimer. Forms heterodimer with DCS2; the interaction inhibits the DCS1 scavenger decapping activity during post-diauxic growth. In terms of processing, phosphorylated. Phosphorylation occurs upon glucose deprivation.

It localises to the cytoplasm. The protein localises to the perinuclear region. It is found in the P-body. The enzyme catalyses a 5'-end (N(7)-methyl 5'-triphosphoguanosine)-ribonucleoside in mRNA + H2O = N(7)-methyl-GMP + a 5'-end diphospho-ribonucleoside in mRNA + 2 H(+). The hydrolytic product 7-methylguanosine diphosphate (m7GDP) efficiently inhibits the decapping scavenger activity and acts as a competitive inhibitor in vitro. Its function is as follows. Decapping scavenger enzyme that catalyzes the cleavage of a residual cap structure following the degradation of mRNAs by the 3'-&gt;5' exosome-mediated mRNA decay pathway. Hydrolyzes cap analog structures like 7-methylguanosine nucleoside triphosphate (m7GpppG) and tri-methyl guanosine nucleoside triphosphate (m3(2,2,7)GpppG) with up to 10 nucleotide substrates (small capped oligoribonucleotides) and specifically releases 5'-phosphorylated RNA fragments and 7-methylguanosine monophosphate (m7GMP) or tri-methyl guanosine nucleoside monophosphate (m3(2,2,7)GMP), respectively. Does not hydrolyze unmethylated cap analog (GpppG) and shows no decapping activity on intact m7GpppG-capped mRNA molecules longer than 25 nucleotides. Does not hydrolyze 7-methylguanosine diphosphate (m7GDP) and tri-methylguanosine diphosphate (m3(2,2,7)GDP) to (m(7)GMP) and m3(2,2,7)GMP, respectively. May also play a role in the 5'-&gt;3 mRNA decay pathway; m7GDP, the downstream product released by the 5'-&gt;3' mRNA mediated decapping activity, may be also converted by DCS1 to m7GMP. Binds to m7GpppG and strongly to m7GDP. May also regulate the 5'-&gt;3' exoribonucleolytic mRNA decay pathway in a cap-independent manner. Negatively regulates trehalase activity. The polypeptide is m7GpppX diphosphatase (Saccharomyces cerevisiae (strain ATCC 204508 / S288c) (Baker's yeast)).